Here is a 462-residue protein sequence, read N- to C-terminus: Argininosuccinate lyase (462 aa).

Belongs to the lyase 1 family. Argininosuccinate lyase subfamily.

It is found in the cytoplasm. The enzyme catalyses 2-(N(omega)-L-arginino)succinate = fumarate + L-arginine. It participates in amino-acid biosynthesis; L-arginine biosynthesis; L-arginine from L-ornithine and carbamoyl phosphate: step 3/3. The polypeptide is Argininosuccinate lyase (Nitratiruptor sp. (strain SB155-2)).